The sequence spans 374 residues: Tomoregulin-2 (374 aa).

A signal peptide spans Met1–Ala39. Residues Ala40–Val320 lie on the Extracellular side of the membrane. Asn55 carries an N-linked (GlcNAc...) asparagine glycan. Kazal-like domains follow at residues Val90–Thr137 and Val181–Asp229. Disulfide bonds link Cys91-Cys121, Cys95-Cys114, Cys103-Cys135, Cys182-Cys213, Cys186-Cys206, Cys195-Cys227, Cys265-Cys278, Cys273-Cys289, and Cys291-Cys300. The 41-residue stretch at His261–Glu301 folds into the EGF-like domain. The tract at residues Lys303–Val320 is required for shedding. Residues Leu321–Ile341 traverse the membrane as a helical segment. Residues Thr342–Ile374 are Cytoplasmic-facing. The tract at residues Arg353–Ile374 is disordered. Residues Gln356–Ile374 are compositionally biased toward polar residues.

This sequence belongs to the tomoregulin family. In terms of processing, O-glycosylated; contains chondroitin sulfate glycosaminoglycans. Post-translationally, a soluble form (TMEFF2-ECD) is produced by proteolytic shedding. This shedding can be induced by phorbol ester or pro-inflammatory cytokines such as TNFalpha, and is mediated by a metalloproteinase ADAM.

The protein localises to the membrane. Functionally, may be a survival factor for hippocampal and mesencephalic neurons. The shedded form may up-regulate cell proliferation. The chain is Tomoregulin-2 (TMEFF2) from Bos taurus (Bovine).